Consider the following 492-residue polypeptide: GDP-fucose protein O-fucosyltransferase 4 (492 aa).

Over 1–7 (MAAGPIR) the chain is Cytoplasmic. The helical; Signal-anchor for type II membrane protein transmembrane segment at 8–24 (VVLVLLGVLSVCAASGH) threads the bilayer. Residues 25–492 (GSVAEREAGG…HEIFMKRQHL (468 aa)) are Lumenal-facing. Residue Asn-166 is glycosylated (N-linked (GlcNAc...) asparagine). Residues Cys-389 and Cys-392 are joined by a disulfide bond. A glycan (N-linked (GlcNAc...) asparagine) is linked at Asn-443.

This sequence belongs to the glycosyltransferase 10 family.

The protein localises to the endoplasmic reticulum membrane. The catalysed reaction is L-threonyl-[protein] + GDP-beta-L-fucose = 3-O-(alpha-L-fucosyl)-L-threonyl-[protein] + GDP + H(+). It carries out the reaction L-seryl-[protein] + GDP-beta-L-fucose = 3-O-(alpha-L-fucosyl)-L-seryl-[protein] + GDP + H(+). It participates in protein modification; protein glycosylation. Functionally, protein O-fucosyltransferase that specifically catalyzes O-fucosylation of serine or threonine residues in EMI domains of target proteins, such as MMRN1, MMRN2 and EMID1. Attaches fucose through an O-glycosidic linkage. O-fucosylation of EMI domain-containing proteins may be required for facilitating protein folding and secretion. Also shows minor alpha-(1,3)-fucosyltransferase activity toward activity toward biantennary N-glycan acceptors. However, this was tested with a library of synthetic substrates and this activity is unsure in vivo. This chain is GDP-fucose protein O-fucosyltransferase 4, found in Homo sapiens (Human).